Here is a 77-residue protein sequence, read N- to C-terminus: Dermatoxin-DA1 (77 aa).

The first 22 residues, 1–22 (MAFLKKSLFLVLFLGLVPLFLC), serve as a signal peptide directing secretion. Positions 23–42 (ENEKREGENEKEENDDQSEE) are excised as a propeptide. Position 76 is a lysine amide (Lys-76).

It belongs to the frog skin active peptide (FSAP) family. Dermatoxin subfamily. Expressed by the skin glands.

The protein localises to the secreted. Functionally, possesses a potent antimicrobial activity against Gram-positive and Gram-negative bacteria. Probably acts by disturbing membrane functions with its amphipathic structure. The polypeptide is Dermatoxin-DA1 (Agalychnis dacnicolor (Giant Mexican leaf frog)).